The primary structure comprises 236 residues: Phosphoribosylaminoimidazole-succinocarboxamide synthase (236 aa).

The protein belongs to the SAICAR synthetase family.

The catalysed reaction is 5-amino-1-(5-phospho-D-ribosyl)imidazole-4-carboxylate + L-aspartate + ATP = (2S)-2-[5-amino-1-(5-phospho-beta-D-ribosyl)imidazole-4-carboxamido]succinate + ADP + phosphate + 2 H(+). It functions in the pathway purine metabolism; IMP biosynthesis via de novo pathway; 5-amino-1-(5-phospho-D-ribosyl)imidazole-4-carboxamide from 5-amino-1-(5-phospho-D-ribosyl)imidazole-4-carboxylate: step 1/2. The polypeptide is Phosphoribosylaminoimidazole-succinocarboxamide synthase (Coprothermobacter proteolyticus (strain ATCC 35245 / DSM 5265 / OCM 4 / BT)).